Reading from the N-terminus, the 112-residue chain is Integration host factor subunit alpha (112 aa).

Belongs to the bacterial histone-like protein family. As to quaternary structure, heterodimer of an alpha and a beta chain.

In terms of biological role, this protein is one of the two subunits of integration host factor, a specific DNA-binding protein that functions in genetic recombination as well as in transcriptional and translational control. In Agrobacterium fabrum (strain C58 / ATCC 33970) (Agrobacterium tumefaciens (strain C58)), this protein is Integration host factor subunit alpha.